The primary structure comprises 203 residues: Probable proteasome subunit beta type-4 (203 aa).

It belongs to the peptidase T1B family. In terms of assembly, the 26S proteasome consists of a 20S proteasome core and two 19S regulatory subunits. The 20S proteasome core is composed of 28 subunits that are arranged in four stacked rings, resulting in a barrel-shaped structure. The two end rings are each formed by seven alpha subunits, and the two central rings are each formed by seven beta subunits. The catalytic chamber with the active sites is on the inside of the barrel.

It is found in the cytoplasm. The protein localises to the nucleus. Its function is as follows. Non-catalytic component of the proteasome, a multicatalytic proteinase complex which is characterized by its ability to cleave peptides with Arg, Phe, Tyr, Leu, and Glu adjacent to the leaving group at neutral or slightly basic pH. The proteasome has an ATP-dependent proteolytic activity. This is Probable proteasome subunit beta type-4 (pcb-4) from Neurospora crassa (strain ATCC 24698 / 74-OR23-1A / CBS 708.71 / DSM 1257 / FGSC 987).